We begin with the raw amino-acid sequence, 727 residues long: Synaptic vesicle glycoprotein 2C (727 aa).

The interval 1-57 (MEDSYKDRTSLMKGAKDIAKEVKKQTVKKVNQAVDRAQDEYTQRSYSRFQDEDDDDD) is interaction with SYT1. Residues 1–154 (MEDSYKDRTS…CGHGRFQWAL (154 aa)) are Cytoplasmic-facing. The disordered stretch occupies residues 22-120 (VKKQTVKKVN…QPKGDEYKDR (99 aa)). A phosphoserine mark is found at serine 75 and serine 76. The residue at position 79 (threonine 79) is a Phosphothreonine. A helical membrane pass occupies residues 155–175 (FFVLGMALMADGVEVFVVGFV). The Extracellular segment spans residues 176–191 (LPSAETDLCIPNSGSG). Residues 192–212 (WLGSIVYLGMMVGAFFWGGLA) traverse the membrane as a helical segment. Over 213-226 (DKVGRKQSLLICMS) the chain is Cytoplasmic. Residues 227 to 247 (VNGFFAFLSSFVQGYGFFLLC) form a helical membrane-spanning segment. A topological domain (extracellular) is located at residue arginine 248. A helical transmembrane segment spans residues 249–269 (LLSGFGIGGAIPTVFSYFAEV). The Cytoplasmic portion of the chain corresponds to 270–280 (LAREKRGEHLS). The helical transmembrane segment at 281 to 301 (WLCMFWMIGGIYASAMAWAII) threads the bilayer. Residues 302–320 (PHYGWSFSMGSAYQFHSWR) are Extracellular-facing. Residues 321–341 (VFVIVCALPCVSSVVALTFMP) traverse the membrane as a helical segment. Over 342 to 437 (ESPRFLLEVG…PVRENTIKLT (96 aa)) the chain is Cytoplasmic. The helical transmembrane segment at 438–458 (IVWFTLSFGYYGLSVWFPDVI) threads the bilayer. Residues 459-578 (KHLQSDEYAL…CQITFDDDYS (120 aa)) lie on the Extracellular side of the membrane. Phosphotyrosine is present on tyrosine 466. 5 N-linked (GlcNAc...) asparagine glycosylation sites follow: asparagine 480, asparagine 484, asparagine 534, asparagine 559, and asparagine 565. The segment at 529 to 566 (NTYFKNCTFIDTLFENTDFEPYKFIDSEFQNCSFLHNK) is (Microbial infection) C.botulinum neurotoxin type A-binding. A helical transmembrane segment spans residues 579-599 (AYWIYFVNFLGTLAVLPGNIV). At 600–609 (SALLMDRIGR) the chain is on the cytoplasmic side. Residues 610 to 630 (LTMLGGSMVLSGISCFFLWFG) traverse the membrane as a helical segment. At 631–636 (TSESMM) the chain is on the extracellular side. A helical membrane pass occupies residues 637–657 (IGMLCLYNGLTISAWNSLDVV). Residues 658-670 (TVELYPTDRRATG) are Cytoplasmic-facing. The chain crosses the membrane as a helical span at residues 671–693 (FGFLNALCKAAAVLGNLIFGSLV). Residues 694–697 (SITK) lie on the Extracellular side of the membrane. A helical transmembrane segment spans residues 698 to 716 (AIPILLASTVLVCGGLVGL). The Cytoplasmic segment spans residues 717–727 (RLPDTRTQVLM).

This sequence belongs to the major facilitator superfamily. In terms of assembly, interacts with SYT1 in a calcium-dependent manner. (Microbial infection) Interacts with C.botulinum neurotoxin type A (BoNT/A, botA). As to quaternary structure, (Microbial infection) Interacts with C.botulinum neurotoxin type F (BoNT/F). Interaction requires glycosylation of SV2 proteins. In terms of processing, N-glycosylated. Expressed at high levels in very few brain areas including the striatum, midbrain and hindbrain, and in the olfactory bulb. Expressed at lower levels in cerebrum, hippocampus and cerebellum (at protein level). Mainly expressed in brain; also detected in lung, liver, kidney.

Its subcellular location is the cytoplasmic vesicle. The protein resides in the secretory vesicle. The protein localises to the synaptic vesicle membrane. Functionally, plays a role in the control of regulated secretion in neural and endocrine cells, enhancing selectively low-frequency neurotransmission. Positively regulates vesicle fusion by maintaining the readily releasable pool of secretory vesicles. Its function is as follows. (Microbial infection) Receptor for C.botulinum neurotoxin type A (BoNT/A, botA); the toxin binds Sv2c via extracellular loop 4. Restores uptake of BoNT/A in rat cells that are deleted for SV2 receptor. In terms of biological role, (Microbial infection) Possible receptor for C.botulinum neurotoxin type D (BoNT/D, botD); BoNT/D does not bind to extracellular loop 4 as do BoNT/A and BoNT/E. Another group does not find a convincing interaction with SV2. (Microbial infection) Receptor for C.botulinum neurotoxin type F (BoNT/F); binding requires glycosylation of Asn-573. This Rattus norvegicus (Rat) protein is Synaptic vesicle glycoprotein 2C (Sv2c).